We begin with the raw amino-acid sequence, 301 residues long: Probable aspartoacylase (301 aa).

Residues H13 and E16 each contribute to the Zn(2+) site. Substrate contacts are provided by residues R54 and 61–62 (NR). H105 contributes to the Zn(2+) binding site. E163 and Y273 together coordinate substrate.

It belongs to the AspA/AstE family. Aspartoacylase subfamily. Zn(2+) is required as a cofactor.

It catalyses the reaction an N-acyl-L-aspartate + H2O = a carboxylate + L-aspartate. The polypeptide is Probable aspartoacylase (Prochlorococcus marinus (strain MIT 9312)).